The following is a 136-amino-acid chain: MTERTLVLIKPDGVQRRLIGEIISRIEAKGLTVAALELKNVDDALARAHYAEHEGKPFFASLLEFITSGPVVAAILEGPRAIAAFRQLAGGTDPVEKATPGTIRGDLGLETQFNLVHGSDSPDSAAREIELWFPGR.

Residues Lys-10, Phe-58, Arg-86, Thr-92, Arg-104, and Asn-114 each contribute to the ATP site. Residue His-117 is the Pros-phosphohistidine intermediate of the active site.

The protein belongs to the NDK family. In terms of assembly, homotetramer. Mg(2+) serves as cofactor.

The protein localises to the cytoplasm. The catalysed reaction is a 2'-deoxyribonucleoside 5'-diphosphate + ATP = a 2'-deoxyribonucleoside 5'-triphosphate + ADP. It carries out the reaction a ribonucleoside 5'-diphosphate + ATP = a ribonucleoside 5'-triphosphate + ADP. Functionally, major role in the synthesis of nucleoside triphosphates other than ATP. The ATP gamma phosphate is transferred to the NDP beta phosphate via a ping-pong mechanism, using a phosphorylated active-site intermediate. This Mycolicibacterium vanbaalenii (strain DSM 7251 / JCM 13017 / BCRC 16820 / KCTC 9966 / NRRL B-24157 / PYR-1) (Mycobacterium vanbaalenii) protein is Nucleoside diphosphate kinase.